The following is a 244-amino-acid chain: Pyridoxine 5'-phosphate synthase (244 aa).

Asn12 serves as a coordination point for 3-amino-2-oxopropyl phosphate. 14 to 15 is a 1-deoxy-D-xylulose 5-phosphate binding site; it reads DH. Arg23 lines the 3-amino-2-oxopropyl phosphate pocket. Residue His48 is the Proton acceptor of the active site. 2 residues coordinate 1-deoxy-D-xylulose 5-phosphate: Arg50 and His55. The Proton acceptor role is filled by Glu75. Thr105 contributes to the 1-deoxy-D-xylulose 5-phosphate binding site. His196 (proton donor) is an active-site residue. 3-amino-2-oxopropyl phosphate is bound by residues Gly197 and 218–219; that span reads GH.

Belongs to the PNP synthase family. In terms of assembly, homooctamer; tetramer of dimers.

Its subcellular location is the cytoplasm. It catalyses the reaction 3-amino-2-oxopropyl phosphate + 1-deoxy-D-xylulose 5-phosphate = pyridoxine 5'-phosphate + phosphate + 2 H2O + H(+). It participates in cofactor biosynthesis; pyridoxine 5'-phosphate biosynthesis; pyridoxine 5'-phosphate from D-erythrose 4-phosphate: step 5/5. In terms of biological role, catalyzes the complicated ring closure reaction between the two acyclic compounds 1-deoxy-D-xylulose-5-phosphate (DXP) and 3-amino-2-oxopropyl phosphate (1-amino-acetone-3-phosphate or AAP) to form pyridoxine 5'-phosphate (PNP) and inorganic phosphate. The protein is Pyridoxine 5'-phosphate synthase of Alcanivorax borkumensis (strain ATCC 700651 / DSM 11573 / NCIMB 13689 / SK2).